Consider the following 334-residue polypeptide: Replication factor C subunit 4 (334 aa).

Residue Gly55–Thr62 coordinates ATP.

Belongs to the activator 1 small subunits family. As to quaternary structure, heteropentamer of various rfc subunits that forms a complex (RFC) with PCNA in the presence of ATP.

The protein localises to the nucleus. The elongation of primed DNA templates by DNA polymerase delta and epsilon requires the action of the accessory proteins PCNA and activator 1. This subunit may be involved in the elongation of the multiprimed DNA template. The polypeptide is Replication factor C subunit 4 (rfc-4) (Caenorhabditis elegans).